We begin with the raw amino-acid sequence, 447 residues long: Asparagine--tRNA ligase (447 aa).

This sequence belongs to the class-II aminoacyl-tRNA synthetase family. In terms of assembly, homodimer.

The protein localises to the cytoplasm. The catalysed reaction is tRNA(Asn) + L-asparagine + ATP = L-asparaginyl-tRNA(Asn) + AMP + diphosphate + H(+). The protein is Asparagine--tRNA ligase of Streptococcus pneumoniae serotype 4 (strain ATCC BAA-334 / TIGR4).